Here is a 317-residue protein sequence, read N- to C-terminus: Curved DNA-binding protein (317 aa).

A J domain is found at 5–69; sequence DYYKILGVEP…QKRAEFDEIR (65 aa).

It localises to the cytoplasm. It is found in the nucleoid. Its function is as follows. DNA-binding protein that preferentially recognizes a curved DNA sequence. It is probably a functional analog of DnaJ; displays overlapping activities with DnaJ, but functions under different conditions, probably acting as a molecular chaperone in an adaptive response to environmental stresses other than heat shock. Lacks autonomous chaperone activity; binds native substrates and targets them for recognition by DnaK. Its activity is inhibited by the binding of CbpM. This chain is Curved DNA-binding protein, found in Pseudomonas putida (strain W619).